We begin with the raw amino-acid sequence, 265 residues long: Histidine racemase (265 aa).

Residue cysteine 67 is the Proton acceptor of the active site. Catalysis depends on cysteine 209, which acts as the Proton donor.

It belongs to the histidine racemase family. As to quaternary structure, homodimer.

It catalyses the reaction L-histidine = D-histidine. With respect to regulation, activity is not affected by buffer composition (PO(4) or Tris), ions (SO(4)(2-), Mg(2+) and EDTA) or the PLP inhibitor hydroxylamine. However, the activity is hindered by iodoacetamide and Hg(2+), which are known inhibitors of enzymes with catalytic thiols. Functionally, cofactor-independent isomerase that catalyzes the reversible conversion of L-histidine to D-histidine. Shows weak activity with L,L-lanthionine. The catalytic turnover is 10'000-fold faster with L-histidine than with L,L-lanthionine. May play a role in growth of F.nucleatum. This Fusobacterium nucleatum subsp. nucleatum (strain ATCC 25586 / DSM 15643 / BCRC 10681 / CIP 101130 / JCM 8532 / KCTC 2640 / LMG 13131 / VPI 4355) protein is Histidine racemase.